A 428-amino-acid polypeptide reads, in one-letter code: Homoserine dehydrogenase (428 aa).

F10, T12, V13, R44, and K106 together coordinate NADPH. V13 lines the NAD(+) pocket. NADP(+) is bound by residues V13, R44, and K106. Na(+)-binding residues include E130, V133, G135, and I137. NADP(+) is bound by residues G188 and E191. The L-homoserine site is built by E191 and D202. The active-site Proton donor is the K206. Position 303 (G303) interacts with NADPH. G303 serves as a coordination point for NAD(+). G303 contacts NADP(+). In terms of domain architecture, ACT spans 351-425; that stretch reads YFSVETPDST…DFKLLNYFKV (75 aa).

It belongs to the homoserine dehydrogenase family. It depends on a metal cation as a cofactor.

The catalysed reaction is L-homoserine + NADP(+) = L-aspartate 4-semialdehyde + NADPH + H(+). It catalyses the reaction L-homoserine + NAD(+) = L-aspartate 4-semialdehyde + NADH + H(+). Its pathway is amino-acid biosynthesis; L-methionine biosynthesis via de novo pathway; L-homoserine from L-aspartate: step 3/3. It participates in amino-acid biosynthesis; L-threonine biosynthesis; L-threonine from L-aspartate: step 3/5. In terms of biological role, catalyzes the conversion of L-aspartate-beta-semialdehyde (L-Asa) to L-homoserine (L-Hse), the third step in the biosynthesis of threonine and methionine from aspartate. This chain is Homoserine dehydrogenase (hom), found in Lactococcus lactis subsp. lactis (strain IL1403) (Streptococcus lactis).